Consider the following 164-residue polypeptide: FMN reductase (NADH) RutF (164 aa).

Belongs to the non-flavoprotein flavin reductase family. RutF subfamily.

It carries out the reaction FMNH2 + NAD(+) = FMN + NADH + 2 H(+). Catalyzes the reduction of FMN to FMNH2 which is used to reduce pyrimidine by RutA via the Rut pathway. The polypeptide is FMN reductase (NADH) RutF (Escherichia coli O127:H6 (strain E2348/69 / EPEC)).